The following is a 491-amino-acid chain: Probable cytosol aminopeptidase (491 aa).

Residues lysine 260 and aspartate 265 each coordinate Mn(2+). Lysine 272 is an active-site residue. Positions 284, 343, and 345 each coordinate Mn(2+). Arginine 347 is an active-site residue.

It belongs to the peptidase M17 family. Requires Mn(2+) as cofactor.

It localises to the cytoplasm. The enzyme catalyses Release of an N-terminal amino acid, Xaa-|-Yaa-, in which Xaa is preferably Leu, but may be other amino acids including Pro although not Arg or Lys, and Yaa may be Pro. Amino acid amides and methyl esters are also readily hydrolyzed, but rates on arylamides are exceedingly low.. It catalyses the reaction Release of an N-terminal amino acid, preferentially leucine, but not glutamic or aspartic acids.. In terms of biological role, presumably involved in the processing and regular turnover of intracellular proteins. Catalyzes the removal of unsubstituted N-terminal amino acids from various peptides. This chain is Probable cytosol aminopeptidase, found in Rippkaea orientalis (strain PCC 8801 / RF-1) (Cyanothece sp. (strain PCC 8801)).